The chain runs to 337 residues: Heme A synthase (337 aa).

Transmembrane regions (helical) follow at residues 6-26, 93-113, 118-138, 154-174, and 192-212; these read ITKW…IGGI, GRIT…KDVI, ILPY…GWYM, LAFH…QLIK, and LIFS…GAMV. His256 is a binding site for heme. 3 consecutive transmembrane segments (helical) span residues 258 to 278, 285 to 305, and 308 to 328; these read LGGY…LKIE, IAYF…ITLL, and VPII…SIII. Residue His316 participates in heme binding.

The protein belongs to the COX15/CtaA family. Type 2 subfamily. In terms of assembly, interacts with CtaB. Heme b serves as cofactor.

It is found in the cell membrane. The catalysed reaction is Fe(II)-heme o + 2 A + H2O = Fe(II)-heme a + 2 AH2. It participates in porphyrin-containing compound metabolism; heme A biosynthesis; heme A from heme O: step 1/1. Its function is as follows. Catalyzes the conversion of heme O to heme A by two successive hydroxylations of the methyl group at C8. The first hydroxylation forms heme I, the second hydroxylation results in an unstable dihydroxymethyl group, which spontaneously dehydrates, resulting in the formyl group of heme A. In Rickettsia felis (strain ATCC VR-1525 / URRWXCal2) (Rickettsia azadi), this protein is Heme A synthase.